The chain runs to 332 residues: Adenosine deaminase (332 aa).

His12 and His14 together coordinate Zn(2+). Residues His14, Asp16, and Gly170 each contribute to the substrate site. Zn(2+) is bound at residue His197. Residue Glu200 is the Proton donor of the active site. Position 278 (Asp278) interacts with Zn(2+).

The protein belongs to the metallo-dependent hydrolases superfamily. Adenosine and AMP deaminases family. Adenosine deaminase subfamily. Zn(2+) is required as a cofactor.

It carries out the reaction adenosine + H2O + H(+) = inosine + NH4(+). It catalyses the reaction 2'-deoxyadenosine + H2O + H(+) = 2'-deoxyinosine + NH4(+). Catalyzes the hydrolytic deamination of adenosine and 2-deoxyadenosine. This Clostridium perfringens (strain 13 / Type A) protein is Adenosine deaminase.